The primary structure comprises 215 residues: Adenylate kinase (215 aa).

10–15 (GSGKGT) is an ATP binding site. The tract at residues 30–59 (STGDILREHVRNGTELGKEAKKYMDAGQLV) is NMP. Residues threonine 31, arginine 36, 57–59 (QLV), 85–88 (GYPR), and glutamine 92 each bind AMP. The interval 126 to 162 (GRRMCKCGRSYHIIFNPPKVPGKCDECGGELYHRDDD) is LID. Arginine 127 lines the ATP pocket. Positions 130 and 132 each coordinate Zn(2+). An ATP-binding site is contributed by 135–136 (SY). Zn(2+) contacts are provided by cysteine 149 and cysteine 152. AMP-binding residues include arginine 159 and arginine 170. Residue glycine 198 coordinates ATP.

Belongs to the adenylate kinase family. Monomer.

It localises to the cytoplasm. The enzyme catalyses AMP + ATP = 2 ADP. The protein operates within purine metabolism; AMP biosynthesis via salvage pathway; AMP from ADP: step 1/1. In terms of biological role, catalyzes the reversible transfer of the terminal phosphate group between ATP and AMP. Plays an important role in cellular energy homeostasis and in adenine nucleotide metabolism. This Methanothrix thermoacetophila (strain DSM 6194 / JCM 14653 / NBRC 101360 / PT) (Methanosaeta thermophila) protein is Adenylate kinase.